We begin with the raw amino-acid sequence, 502 residues long: Probable cytosol aminopeptidase 2 (502 aa).

Mn(2+) is bound by residues K269 and D274. K281 is a catalytic residue. Mn(2+)-binding residues include D292, D351, and E353. R355 is a catalytic residue.

This sequence belongs to the peptidase M17 family. Mn(2+) serves as cofactor.

It localises to the cytoplasm. The catalysed reaction is Release of an N-terminal amino acid, Xaa-|-Yaa-, in which Xaa is preferably Leu, but may be other amino acids including Pro although not Arg or Lys, and Yaa may be Pro. Amino acid amides and methyl esters are also readily hydrolyzed, but rates on arylamides are exceedingly low.. It catalyses the reaction Release of an N-terminal amino acid, preferentially leucine, but not glutamic or aspartic acids.. Its function is as follows. Presumably involved in the processing and regular turnover of intracellular proteins. Catalyzes the removal of unsubstituted N-terminal amino acids from various peptides. This Shewanella oneidensis (strain ATCC 700550 / JCM 31522 / CIP 106686 / LMG 19005 / NCIMB 14063 / MR-1) protein is Probable cytosol aminopeptidase 2 (pepA2).